We begin with the raw amino-acid sequence, 151 residues long: UPF0178 protein CJA_1978 (151 aa).

The protein belongs to the UPF0178 family.

The polypeptide is UPF0178 protein CJA_1978 (Cellvibrio japonicus (strain Ueda107) (Pseudomonas fluorescens subsp. cellulosa)).